A 321-amino-acid polypeptide reads, in one-letter code: Lipoyl synthase (321 aa).

[4Fe-4S] cluster-binding residues include Cys-68, Cys-73, Cys-79, Cys-94, Cys-98, Cys-101, and Ser-308. One can recognise a Radical SAM core domain in the interval Phe-80–Thr-297.

It belongs to the radical SAM superfamily. Lipoyl synthase family. Requires [4Fe-4S] cluster as cofactor.

The protein localises to the cytoplasm. The catalysed reaction is [[Fe-S] cluster scaffold protein carrying a second [4Fe-4S](2+) cluster] + N(6)-octanoyl-L-lysyl-[protein] + 2 oxidized [2Fe-2S]-[ferredoxin] + 2 S-adenosyl-L-methionine + 4 H(+) = [[Fe-S] cluster scaffold protein] + N(6)-[(R)-dihydrolipoyl]-L-lysyl-[protein] + 4 Fe(3+) + 2 hydrogen sulfide + 2 5'-deoxyadenosine + 2 L-methionine + 2 reduced [2Fe-2S]-[ferredoxin]. It functions in the pathway protein modification; protein lipoylation via endogenous pathway; protein N(6)-(lipoyl)lysine from octanoyl-[acyl-carrier-protein]: step 2/2. Catalyzes the radical-mediated insertion of two sulfur atoms into the C-6 and C-8 positions of the octanoyl moiety bound to the lipoyl domains of lipoate-dependent enzymes, thereby converting the octanoylated domains into lipoylated derivatives. The sequence is that of Lipoyl synthase from Shewanella denitrificans (strain OS217 / ATCC BAA-1090 / DSM 15013).